We begin with the raw amino-acid sequence, 123 residues long: Succinate dehydrogenase assembly factor 3, mitochondrial (123 aa).

Residues 1–31 constitute a mitochondrion transit peptide; that stretch reads MANPAHISAVRTLYKKILVLHRFLPIDLRAL.

It belongs to the complex I LYR family. SDHAF3 subfamily. As to quaternary structure, interacts with sdhb within an sdha-sdhb subcomplex.

The protein localises to the mitochondrion matrix. Its function is as follows. Plays an essential role in the assembly of succinate dehydrogenase (SDH), an enzyme complex (also referred to as respiratory complex II) that is a component of both the tricarboxylic acid (TCA) cycle and the mitochondrial electron transport chain, and which couples the oxidation of succinate to fumarate with the reduction of ubiquinone (coenzyme Q) to ubiquinol. Promotes maturation of the iron-sulfur protein subunit sdhb of the SDH catalytic dimer, protecting it from the deleterious effects of oxidants. May act together with SDHAF1. The polypeptide is Succinate dehydrogenase assembly factor 3, mitochondrial (Danio rerio (Zebrafish)).